The following is a 756-amino-acid chain: Disintegrin and metalloproteinase domain-containing protein 5 (756 aa).

Positions 1–16 are cleaved as a signal peptide; sequence MFLLLVLLTGLGGMHA. Positions 17 to 142 are excised as a propeptide; that stretch reads DLNPHKTFLQ…AVSGFIHKIY (126 aa). Residues 17–698 are Extracellular-facing; sequence DLNPHKTFLQ…GRHAPFQKQR (682 aa). One can recognise a Peptidase M12B domain in the interval 183–380; sequence RYIEMHIVVD…NGLTCLQTNP (198 aa). Disulfide bonds link Cys292-Cys375, Cys334-Cys359, Cys336-Cys341, and Cys449-Cys470. The region spanning 389–478 is the Disintegrin domain; that stretch reads RRICGNGLLE…YCLLDTYVRD (90 aa). A glycan (N-linked (GlcNAc...) asparagine) is linked at Asn559. In terms of domain architecture, EGF-like spans 630–664; sequence DFETCEASIECSGHGICNNFNHCHCEKGYNPPHCK. 3 disulfide bridges follow: Cys634–Cys646, Cys640–Cys652, and Cys654–Cys663. The chain crosses the membrane as a helical span at residues 699–719; the sequence is FQLIFYISLPVLIITTAILIK. At 720–756 the chain is on the cytoplasmic side; the sequence is RKKLRELCYRGETESESSVSQESSSNSKSSLSESTSL. The tract at residues 731 to 756 is disordered; sequence ETESESSVSQESSSNSKSSLSESTSL. Residues 735 to 756 are compositionally biased toward low complexity; sequence ESSVSQESSSNSKSSLSESTSL.

Interacts with TEX101. In terms of processing, subject to proteolytic processing during epididymal transit of spermatozoa. As to expression, detected in testis (at protein level). Detected in adult and prepubertal testis. Detected at very low levels in heart, kidney, brain, muscle ovary and uterus.

The protein localises to the membrane. This is a non catalytic metalloprotease-like protein. May play a role in sperm-egg fusion. In Macaca fascicularis (Crab-eating macaque), this protein is Disintegrin and metalloproteinase domain-containing protein 5 (ADAM5).